The following is a 261-amino-acid chain: MSRKPLIAGNWKMNLNHFEAIALVQKIAFALPDKYYDKVDVTVLPPFTDLRSVQTLVDGDKLRLSYGAQDLSQHDSGAYTGDISGAFLAKLGCTFVVVGHSERRTYHNEDDALVAAKAAAALKHELTPIICIGEHLEVREAGNHVIHCEEQLRGSLAGLSAEQIGKVVIAYEPVWAIGTGRVASASDAQEVCAAIRKELASLASAQIADSVRVLYGGSVNAKNVGELIAQDDIDGGLVGGASLDGEQFATLAAIAAGGPLP.

Residue 10–12 (NWK) coordinates substrate. Histidine 100 (electrophile) is an active-site residue. Glutamate 172 functions as the Proton acceptor in the catalytic mechanism. Residues glycine 178, serine 218, and 239–240 (GG) contribute to the substrate site.

The protein belongs to the triosephosphate isomerase family. As to quaternary structure, homodimer.

The protein resides in the cytoplasm. The enzyme catalyses D-glyceraldehyde 3-phosphate = dihydroxyacetone phosphate. It participates in carbohydrate biosynthesis; gluconeogenesis. It functions in the pathway carbohydrate degradation; glycolysis; D-glyceraldehyde 3-phosphate from glycerone phosphate: step 1/1. Functionally, involved in the gluconeogenesis. Catalyzes stereospecifically the conversion of dihydroxyacetone phosphate (DHAP) to D-glyceraldehyde-3-phosphate (G3P). The sequence is that of Triosephosphate isomerase from Mycobacterium avium (strain 104).